Consider the following 292-residue polypeptide: Cbb3-type cytochrome c oxidase subunit CcoP (292 aa).

2 helical membrane passes run F11 to I31 and V62 to G82. Cytochrome c domains are found at residues E116–I195 and Q205–K288. Heme c-binding residues include C129, C132, H133, M174, C219, C222, H223, and M264.

This sequence belongs to the CcoP / FixP family. As to quaternary structure, component of the cbb3-type cytochrome c oxidase at least composed of CcoN, CcoO, CcoQ and CcoP. Requires heme c as cofactor.

It is found in the cell inner membrane. Its pathway is energy metabolism; oxidative phosphorylation. C-type cytochrome. Part of the cbb3-type cytochrome c oxidase complex. CcoP subunit is required for transferring electrons from donor cytochrome c via its heme groups to CcoO subunit. From there, electrons are shuttled to the catalytic binuclear center of CcoN subunit where oxygen reduction takes place. The complex also functions as a proton pump. This chain is Cbb3-type cytochrome c oxidase subunit CcoP, found in Helicobacter pylori (Campylobacter pylori).